A 208-amino-acid chain; its full sequence is Large ribosomal subunit protein uL4 (208 aa).

The disordered stretch occupies residues 45–77; that stretch reads RQGTHKAKERAEIKGSTRKIKKQKGTGTARAGS.

It belongs to the universal ribosomal protein uL4 family. In terms of assembly, part of the 50S ribosomal subunit.

In terms of biological role, one of the primary rRNA binding proteins, this protein initially binds near the 5'-end of the 23S rRNA. It is important during the early stages of 50S assembly. It makes multiple contacts with different domains of the 23S rRNA in the assembled 50S subunit and ribosome. Functionally, forms part of the polypeptide exit tunnel. The sequence is that of Large ribosomal subunit protein uL4 from Christiangramia forsetii (strain DSM 17595 / CGMCC 1.15422 / KT0803) (Gramella forsetii).